Consider the following 282-residue polypeptide: Ammonia transport outward protein 2 (282 aa).

A disordered region spans residues 1 to 34 (MSDREQSSGNTAFENPKALDSSEGEFISENNDQS). Position 2 is an N-acetylserine (Ser-2). Residues Ser-2, Ser-7, Ser-21, Ser-22, Ser-28, and Ser-40 each carry the phosphoserine modification. Residues 2 to 86 (SDREQSSGNT…GLAPAPVHKF (85 aa)) lie on the Extracellular side of the membrane. The chain crosses the membrane as a helical span at residues 87–107 (ANPAPLGLSGFALTTFVLSMF). Residues 108–119 (NARAQGITIPNV) lie on the Cytoplasmic side of the membrane. Residues 120 to 140 (VVGCAMFYGGLVQLIAGIWEI) form a helical membrane-spanning segment. Over 141–150 (ALENTFGGTA) the chain is Extracellular. A helical transmembrane segment spans residues 151 to 171 (LCSFGGFWLSFGAIYIPWFGI). At 172–184 (LDAYKDKESDLGN) the chain is on the cytoplasmic side. A helical membrane pass occupies residues 185-205 (ALGFYLLGWALFTFGLSVCTM). Over 206–207 (KS) the chain is Extracellular. A helical transmembrane segment spans residues 208–228 (TIMFFALFFLLAVTFLLLSIA). Residues 229 to 238 (NFTGEVGVTR) lie on the Cytoplasmic side of the membrane. A helical transmembrane segment spans residues 239 to 259 (AGGVLGVIVAFIAWYNAYAGI). The Extracellular segment spans residues 260–282 (ATRQNSYIMVHPFALPSNDKVFF).

Belongs to the acetate uptake transporter (AceTr) (TC 2.A.96) family.

It localises to the cell membrane. Its function is as follows. Transporter protein required for ammonia export. Involved in acetate resistance. The polypeptide is Ammonia transport outward protein 2 (ATO2) (Saccharomyces cerevisiae (strain ATCC 204508 / S288c) (Baker's yeast)).